Here is a 201-residue protein sequence, read N- to C-terminus: Recombination protein RecR (201 aa).

The C4-type zinc finger occupies 60–75 (CSCCGNVDTIDPCTVC). A Toprim domain is found at 83-178 (AVIIVVEDVA…RITRLAHGVP (96 aa)).

Belongs to the RecR family.

Functionally, may play a role in DNA repair. It seems to be involved in an RecBC-independent recombinational process of DNA repair. It may act with RecF and RecO. This Sinorhizobium medicae (strain WSM419) (Ensifer medicae) protein is Recombination protein RecR.